Here is a 400-residue protein sequence, read N- to C-terminus: tRNA-specific 2-thiouridylase MnmA (400 aa).

Residues 19-26 and Leu45 contribute to the ATP site; that span reads AMSGGVDS. The active-site Nucleophile is the Cys113. Cys113 and Cys210 are oxidised to a cystine. Position 137 (Gly137) interacts with ATP. Positions 160-162 are interaction with tRNA; the sequence is RDQ. Cys210 (cysteine persulfide intermediate) is an active-site residue.

The protein belongs to the MnmA/TRMU family.

Its subcellular location is the cytoplasm. The enzyme catalyses S-sulfanyl-L-cysteinyl-[protein] + uridine(34) in tRNA + AH2 + ATP = 2-thiouridine(34) in tRNA + L-cysteinyl-[protein] + A + AMP + diphosphate + H(+). Functionally, catalyzes the 2-thiolation of uridine at the wobble position (U34) of tRNA, leading to the formation of s(2)U34. The polypeptide is tRNA-specific 2-thiouridylase MnmA (Nitrobacter hamburgensis (strain DSM 10229 / NCIMB 13809 / X14)).